A 432-amino-acid polypeptide reads, in one-letter code: Glycerophosphocholine acyltransferase 1 (432 aa).

Topologically, residues 1–110 (MYKLDNNDID…DSIFFKNSSR (110 aa)) are cytoplasmic. A Phosphoserine modification is found at S78. A helical membrane pass occupies residues 111–131 (LEKAFYPFTLFNIFFIGFLMG). Residue R132 is a topological domain, lumenal. The helical transmembrane segment at 133–153 (FPEWFHVYYTILFFVLMPIRF) threads the bilayer. At 154–162 (YTYYKTKNH) the chain is on the cytoplasmic side. A helical membrane pass occupies residues 163-183 (YFLADFCYFVNMLCLLFIWIF). The Lumenal portion of the chain corresponds to 184–187 (PYSY). The helical transmembrane segment at 188–208 (SLFQSCFAFTFGTLCFAVITW) threads the bilayer. At 209–221 (RNSLVIHSIDKTT) the chain is on the cytoplasmic side. Residues 222-242 (SCFIHIIPPCVMYVIYHGLPL) traverse the membrane as a helical segment. Residues 243–263 (EYKIERFPGAIIQSELDIKKN) lie on the Lumenal side of the membrane. A helical transmembrane segment spans residues 264–284 (ILWTSLYYLVWQSLYHYFITL). The Cytoplasmic segment spans residues 285–318 (KKSSKIKSGERMTSFEYLTTHQFKNFWAVKLRSP). The helical transmembrane segment at 319 to 339 (WPMIIYTLSQYFYQLFTMLLC) threads the bilayer. The Lumenal segment spans residues 340–346 (GIWIRYK). A helical transmembrane segment spans residues 347-369 (LAAALFLTIVFLWASHNGATYYI). At 370 to 432 (DHYGKNFEKE…DSSSVSSKSD (63 aa)) the chain is on the cytoplasmic side. A disordered region spans residues 413 to 432 (LNVNRDEDFDDSSSVSSKSD).

This sequence belongs to the GPC1 family.

The protein resides in the membrane. The enzyme catalyses sn-glycerol 3-phosphocholine + an acyl-CoA = a 1-acyl-sn-glycero-3-phosphocholine + CoA. It carries out the reaction sn-glycero-3-phosphoethanolamine + an acyl-CoA = a monoacyl-sn-glycero-3-phosphoethanolamine + CoA. The catalysed reaction is sn-glycero-3-phosphoethanolamine + (9Z)-octadecenoyl-CoA = (9Z-octadecenoyl)-sn-glycero-3-phosphoethanolamine + CoA. It catalyses the reaction sn-glycerol 3-phosphocholine + hexadecanoyl-CoA = hexadecanoyl-sn-glycero-3-phosphocholine + CoA. The enzyme catalyses (9Z,12Z)-octadecadienoyl-CoA + sn-glycerol 3-phosphocholine = (9Z,12Z-octadecadienoyl)-sn-glycero-3-phosphocholine + CoA. It carries out the reaction (12R)-hydroxy-(9Z)-octadecenoyl-CoA + sn-glycerol 3-phosphocholine = (12R-hydroxy-9Z-octadecenoyl)-sn-glycero-3-phosphocholine + CoA. The catalysed reaction is (9Z,12Z,15Z)-octadecatrienoyl-CoA + sn-glycerol 3-phosphocholine = (9Z,12Z,15Z-octadecatrienoyl)-sn-glycero-3-phosphocholine + CoA. It catalyses the reaction sn-glycerol 3-phosphocholine + (9Z)-octadecenoyl-CoA = (9Z-octadecenoyl)-sn-glycero-3-phosphocholine + CoA. The enzyme catalyses 1-(9Z-octadecenoyl)-sn-glycero-3-phosphoethanolamine + sn-glycerol 3-phosphocholine = (9Z-octadecenoyl)-sn-glycero-3-phosphocholine + sn-glycero-3-phosphoethanolamine. Its activity is regulated as follows. The GPCAT activity is sensitive to N-ethylmaleimide, phenanthroline, and divalent cations including Ca(2+), Mg(2+), Mn(2+) and Zn(2+). The activity is also inhibited by glycerol-3-phosphate (G3P). Glycerophosphocholine acyltransferase (GPCAT) that utilizes acyl-CoA to acylate glycero-3-phosphocholine (GPC), forming lysophosphatidylcholine (LPC). Shows broad acyl specificities with a preference for 16:0-CoA, polyunsaturated acyl-CoA, and the hydroxylated ricinoleoyl-CoA. Also catalyzes the acylation of glycero-3-phosphoethanolamine (GPE) with acyl-CoA. In addition to acyl-CoA, GPCAT efficiently utilizes LPC and lysophosphatidylethanolamine (LPE) as acyl donors in the acylation of GPC. Contributes to the maintenance of phosphatidylcholine (PC) homeostasis and might also have specific functions in acyl editing of PC, such as transferring acyl groups modified at the sn-2 position of PC to the sn-1. Involved in postsynthetic PC remodeling that produces more saturated PC species. The polypeptide is Glycerophosphocholine acyltransferase 1 (Saccharomyces cerevisiae (strain ATCC 204508 / S288c) (Baker's yeast)).